The sequence spans 957 residues: Glycine dehydrogenase (decarboxylating) (957 aa).

N6-(pyridoxal phosphate)lysine is present on lysine 708.

Belongs to the GcvP family. As to quaternary structure, the glycine cleavage system is composed of four proteins: P, T, L and H. It depends on pyridoxal 5'-phosphate as a cofactor.

It catalyses the reaction N(6)-[(R)-lipoyl]-L-lysyl-[glycine-cleavage complex H protein] + glycine + H(+) = N(6)-[(R)-S(8)-aminomethyldihydrolipoyl]-L-lysyl-[glycine-cleavage complex H protein] + CO2. Its function is as follows. The glycine cleavage system catalyzes the degradation of glycine. The P protein binds the alpha-amino group of glycine through its pyridoxal phosphate cofactor; CO(2) is released and the remaining methylamine moiety is then transferred to the lipoamide cofactor of the H protein. The sequence is that of Glycine dehydrogenase (decarboxylating) from Salmonella dublin (strain CT_02021853).